The sequence spans 165 residues: Pro-MCH (165 aa).

A signal peptide spans 1-21; that stretch reads MAKMSLSSYMLMLAFSLFSHG. A compositionally biased stretch (basic and acidic residues) spans 69 to 82; the sequence is DESGFMKDDDDKTT. The segment at 69–89 is disordered; sequence DESGFMKDDDDKTTKNTGSKQ. Ile-143 carries the isoleucine amide modification. A disulfide bond links Cys-153 and Cys-162.

It belongs to the melanin-concentrating hormone family. Post-translationally, pro-MCH is processed differentially in the brain and in peripheral organs producing two neuropeptides; NEI and MCH. A third peptide, NGE, may also be produced. Preferential processing in neurons by prohormone convertase 2 (PC2) generates NEI. MCH is generated in neurons of the lateral hypothalmic area by several prohormone convertases including PC1/3, PC2 and PC5/6. In terms of tissue distribution, MCH is present in all regions of the brain and in neurointermediate lobe of the pituarity gland, with highest concentrations in the hypothalamus. Also expressed to a much lesser extent in stomach, lamina propria of both duodenum and colon, ovary, thymus, pancreas, adrenal gland and testis (spermatogonia, early spermatocytes and Sertoli cells). Weak expression in heart and lung. The other peptides are expressed at least in Sertoli cells, nei being also expressed in brain, stomach and proximal duodenum. In brain exclusively mature mch and nei peptides are present. In peripheral tissues a large product, encompassing the NEI and MCH domains of the precursor, is found predominantly. At low levels fully processed MCH and NEI peptides are present in gut. No expression in peripheral blood.

It localises to the secreted. Its function is as follows. MCH inhibits ACTH secretion at the end of the light on period which corresponds to the peak of the circadian rhythm in ACTH. Inhibits also stress induced ACTH release during the light off period of the cycle. Involved as a neurotransmitter or neuromodulator in a broad array of neuronal functions. Stimulates sexual behavior when injected into the ventromedial nucleus, this effect is antagonized by NEI. In the medial preoptic area, stimulates anxiety and sexual behavior. Antagonizes inhibitory effect of melanotropin alpha on exploration behavior. In terms of biological role, NEI can influence differentiation of neuronal processes in brain neurons. Affects the content of neurofilament protein in neuritogenesis (in vitro). May also be a neuromodulatory factor. In behavioral tests, it stimulates exploration and anxiety when injected into the ventromedial nucleus. Also stimulates grooming, locomotion and rearing. May antagonize the inhibitory effect of mch on ACTH release. Reduces dopamine and dopac release in the ventromedial nucleus. The chain is Pro-MCH (Pmch) from Rattus norvegicus (Rat).